Consider the following 525-residue polypeptide: NADH-quinone oxidoreductase subunit N (525 aa).

Transmembrane regions (helical) follow at residues 26–46 (LSPM…DAFA), 53–73 (VLQP…VVLL), 90–110 (PTLF…LLVA), 143–163 (VQTE…LFVA), 167–187 (LLVM…LCGL), 202–222 (YFLL…FAYG), 246–266 (LYLS…AAPF), 278–298 (PTPI…GALL), 314–334 (PVIW…ALTQ), 341–361 (LAYS…GSNI), 368–388 (MFYL…VSLV), 411–431 (LAGT…TSGF), 449–469 (LVVV…RVIV), and 487–507 (PTLT…LGVA).

It belongs to the complex I subunit 2 family. In terms of assembly, NDH-1 is composed of 14 different subunits. Subunits NuoA, H, J, K, L, M, N constitute the membrane sector of the complex.

The protein localises to the cell membrane. It carries out the reaction a quinone + NADH + 5 H(+)(in) = a quinol + NAD(+) + 4 H(+)(out). NDH-1 shuttles electrons from NADH, via FMN and iron-sulfur (Fe-S) centers, to quinones in the respiratory chain. The immediate electron acceptor for the enzyme in this species is believed to be a menaquinone. Couples the redox reaction to proton translocation (for every two electrons transferred, four hydrogen ions are translocated across the cytoplasmic membrane), and thus conserves the redox energy in a proton gradient. In Parafrankia sp. (strain EAN1pec), this protein is NADH-quinone oxidoreductase subunit N.